The following is a 523-amino-acid chain: 2-isopropylmalate synthase (523 aa).

A Pyruvate carboxyltransferase domain is found at 5-267 (VIIFDTTLRD…ETGINAKEIH (263 aa)). Residues Asp-14, His-202, His-204, and Asn-238 each coordinate Mn(2+). A regulatory domain region spans residues 392–523 (KLQQLVVHSD…QQEKQVLGGV (132 aa)).

Belongs to the alpha-IPM synthase/homocitrate synthase family. LeuA type 1 subfamily. As to quaternary structure, homodimer. Mn(2+) serves as cofactor.

The protein resides in the cytoplasm. It carries out the reaction 3-methyl-2-oxobutanoate + acetyl-CoA + H2O = (2S)-2-isopropylmalate + CoA + H(+). Its pathway is amino-acid biosynthesis; L-leucine biosynthesis; L-leucine from 3-methyl-2-oxobutanoate: step 1/4. Functionally, catalyzes the condensation of the acetyl group of acetyl-CoA with 3-methyl-2-oxobutanoate (2-ketoisovalerate) to form 3-carboxy-3-hydroxy-4-methylpentanoate (2-isopropylmalate). This Shewanella piezotolerans (strain WP3 / JCM 13877) protein is 2-isopropylmalate synthase.